The chain runs to 76 residues: Acyl carrier protein (76 aa).

One can recognise a Carrier domain in the interval 1–76 (MSIEERVKKI…SAIDYVQNNQ (76 aa)). Serine 36 bears the O-(pantetheine 4'-phosphoryl)serine mark.

It belongs to the acyl carrier protein (ACP) family. 4'-phosphopantetheine is transferred from CoA to a specific serine of apo-ACP by AcpS. This modification is essential for activity because fatty acids are bound in thioester linkage to the sulfhydryl of the prosthetic group.

The protein localises to the cytoplasm. It participates in lipid metabolism; fatty acid biosynthesis. Its function is as follows. Carrier of the growing fatty acid chain in fatty acid biosynthesis. The polypeptide is Acyl carrier protein (Actinobacillus succinogenes (strain ATCC 55618 / DSM 22257 / CCUG 43843 / 130Z)).